The chain runs to 144 residues: Large ribosomal subunit protein uL15 (144 aa).

Residues 1–13 are compositionally biased toward basic and acidic residues; sequence MKLNELKPAEGSR. The segment at 1–47 is disordered; the sequence is MKLNELKPAEGSRKVRNRVGRGDSSGNGKTAGRGQKGQKARSKTRLG. A compositionally biased stretch (gly residues) spans 23–35; sequence DSSGNGKTAGRGQ.

This sequence belongs to the universal ribosomal protein uL15 family. As to quaternary structure, part of the 50S ribosomal subunit.

Its function is as follows. Binds to the 23S rRNA. The chain is Large ribosomal subunit protein uL15 from Levilactobacillus brevis (strain ATCC 367 / BCRC 12310 / CIP 105137 / JCM 1170 / LMG 11437 / NCIMB 947 / NCTC 947) (Lactobacillus brevis).